The sequence spans 89 residues: Small ribosomal subunit protein uS15 (89 aa).

Residues 1-25 (MSLDTTEKQQLINTHQTHGTDTGSA) form a disordered region. Polar residues predominate over residues 8 to 25 (KQQLINTHQTHGTDTGSA).

Belongs to the universal ribosomal protein uS15 family. As to quaternary structure, part of the 30S ribosomal subunit. Forms a bridge to the 50S subunit in the 70S ribosome, contacting the 23S rRNA.

In terms of biological role, one of the primary rRNA binding proteins, it binds directly to 16S rRNA where it helps nucleate assembly of the platform of the 30S subunit by binding and bridging several RNA helices of the 16S rRNA. Its function is as follows. Forms an intersubunit bridge (bridge B4) with the 23S rRNA of the 50S subunit in the ribosome. This chain is Small ribosomal subunit protein uS15, found in Synechococcus sp. (strain CC9902).